The sequence spans 156 residues: Putative HTH-type transcriptional regulator YwgB (156 aa).

An HTH rrf2-type domain is found at 2-133 (KMKSGMEQAV…REESLQHVMD (132 aa)).

The chain is Putative HTH-type transcriptional regulator YwgB (ywgB) from Bacillus subtilis (strain 168).